The chain runs to 718 residues: 1-deoxy-D-xylulose-5-phosphate synthase 1, chloroplastic (718 aa).

A chloroplast-targeting transit peptide spans 1–55 (MAFCALSFPAHISRATTPAPSDLQKSSSFSSRFYWGADLLRPSQYKVRKIQSGVY). Thiamine diphosphate contacts are provided by residues His143 and 184–186 (GHS). A Mg(2+)-binding site is contributed by Asp215. Residues 216 to 217 (GA), Asn244, Tyr365, and Glu447 each bind thiamine diphosphate. Asn244 contributes to the Mg(2+) binding site.

This sequence belongs to the transketolase family. DXPS subfamily. Homodimer. Mg(2+) serves as cofactor. Thiamine diphosphate is required as a cofactor. Expressed in trichomes, leaves, flowers, roots and stems.

It is found in the plastid. The protein resides in the chloroplast. The enzyme catalyses D-glyceraldehyde 3-phosphate + pyruvate + H(+) = 1-deoxy-D-xylulose 5-phosphate + CO2. Its pathway is metabolic intermediate biosynthesis; 1-deoxy-D-xylulose 5-phosphate biosynthesis; 1-deoxy-D-xylulose 5-phosphate from D-glyceraldehyde 3-phosphate and pyruvate: step 1/1. Functionally, catalyzes the acyloin condensation reaction between C atoms 2 and 3 of pyruvate and glyceraldehyde 3-phosphate to yield 1-deoxy-D-xylulose-5-phosphate (DXP). The chain is 1-deoxy-D-xylulose-5-phosphate synthase 1, chloroplastic from Cannabis sativa (Hemp).